Reading from the N-terminus, the 617-residue chain is Dihydroxy-acid dehydratase (617 aa).

Asp81 lines the Mg(2+) pocket. A [2Fe-2S] cluster-binding site is contributed by Cys122. Positions 123 and 124 each coordinate Mg(2+). Lys124 bears the N6-carboxylysine mark. Residue Cys195 participates in [2Fe-2S] cluster binding. A Mg(2+)-binding site is contributed by Glu491. Ser517 functions as the Proton acceptor in the catalytic mechanism.

It belongs to the IlvD/Edd family. As to quaternary structure, homodimer. [2Fe-2S] cluster is required as a cofactor. It depends on Mg(2+) as a cofactor.

It carries out the reaction (2R)-2,3-dihydroxy-3-methylbutanoate = 3-methyl-2-oxobutanoate + H2O. It catalyses the reaction (2R,3R)-2,3-dihydroxy-3-methylpentanoate = (S)-3-methyl-2-oxopentanoate + H2O. It participates in amino-acid biosynthesis; L-isoleucine biosynthesis; L-isoleucine from 2-oxobutanoate: step 3/4. It functions in the pathway amino-acid biosynthesis; L-valine biosynthesis; L-valine from pyruvate: step 3/4. Functions in the biosynthesis of branched-chain amino acids. Catalyzes the dehydration of (2R,3R)-2,3-dihydroxy-3-methylpentanoate (2,3-dihydroxy-3-methylvalerate) into 2-oxo-3-methylpentanoate (2-oxo-3-methylvalerate) and of (2R)-2,3-dihydroxy-3-methylbutanoate (2,3-dihydroxyisovalerate) into 2-oxo-3-methylbutanoate (2-oxoisovalerate), the penultimate precursor to L-isoleucine and L-valine, respectively. The sequence is that of Dihydroxy-acid dehydratase from Nitrosococcus oceani (strain ATCC 19707 / BCRC 17464 / JCM 30415 / NCIMB 11848 / C-107).